We begin with the raw amino-acid sequence, 537 residues long: Beta-1-syntrophin (537 aa).

Alanine 2 is subject to N-acetylalanine. PH domains follow at residues 18–297 (RAQR…SNAG) and 321–432 (EIRH…QGCH). Phosphoserine occurs at positions 86, 125, and 204. The 84-residue stretch at 111 to 194 (GVKVLKQELG…EVLLEVKYMR (84 aa)) folds into the PDZ domain. Residues 204–233 (SPVSEIGWETPPPESPRLGGGSAEPLSSQS) form a disordered region. Threonine 213 carries the post-translational modification Phosphothreonine. Phosphoserine is present on residues serine 218, serine 225, serine 231, serine 235, and serine 388. One can recognise an SU domain in the interval 481 to 537 (PYEKLKMSSDDGIRMLYLDFGGKEGEIQLDLHSCPKPIVFIIHSFLSAKITRLGLVA). Residues 517-537 (PIVFIIHSFLSAKITRLGLVA) form a calmodulin-binding region.

The protein belongs to the syntrophin family. In terms of assembly, monomer and homodimer. Interacts with the viral HTLV-1 TAX protein and other members of the syntrophin family: SNTA1 and SNTB2. Interacts with the dystrophin protein DMD and related proteins DTNA and UTRN and with the sodium channel proteins SCN4A and SCN5A. Interacts with DTNB. In terms of processing, phosphorylated by CaM-kinase II. In terms of tissue distribution, ubiquitous. Expressed at high levels in the liver.

It is found in the cell membrane. The protein localises to the sarcolemma. Its subcellular location is the cell junction. It localises to the cytoplasm. The protein resides in the cytoskeleton. Its function is as follows. Adapter protein that binds to and probably organizes the subcellular localization of a variety of membrane proteins. May link various receptors to the actin cytoskeleton and the dystrophin glycoprotein complex. This Mus musculus (Mouse) protein is Beta-1-syntrophin (Sntb1).